The sequence spans 314 residues: Olfactory receptor 1 (314 aa).

At 1–29 (MTERNQTVISQFLLLGLPIPPEHQHVFYA) the chain is on the extracellular side. Asn-5 carries an N-linked (GlcNAc...) asparagine glycan. The chain crosses the membrane as a helical span at residues 30-50 (LFLSMYLTTVLGNLIIIILIL). Over 51-59 (LDSHLHTPM) the chain is Cytoplasmic. A helical transmembrane segment spans residues 60–81 (YLFLSNLSFSDLCFSSVTMPKL). Residues 82–97 (LQNMQSQVPSIPYAGC) are Extracellular-facing. Cys-97 and Cys-179 form a disulfide bridge. The helical transmembrane segment at 98–118 (LSQIYFFLFFGDLGNFLLVAM) threads the bilayer. Topologically, residues 119-143 (AYDRYVAICFPLHYMSIMSPKLCVS) are cytoplasmic. Residues 144–164 (LVVLSWVLTTFHAMLHTLLMA) form a helical membrane-spanning segment. Residues 165–196 (RLSFCEDNVIPHFFCDMSALLKLACSDTRVNE) lie on the Extracellular side of the membrane. Residues 197-217 (VVIFIVVSLFLVLPFALIIMS) form a helical membrane-spanning segment. The Cytoplasmic portion of the chain corresponds to 218–240 (YVRIVSSILKVPSSQGIYKAFST). The chain crosses the membrane as a helical span at residues 241 to 261 (CGSHLSVVSLFYGTVIGLYLC). Topologically, residues 262–271 (PSSNNSTVKE) are extracellular. Residues Asn-265 and Asn-266 are each glycosylated (N-linked (GlcNAc...) asparagine). A helical membrane pass occupies residues 272–292 (TVMSLMYTVVTPMLNPFIYSL). Residues 293–314 (RNRDIKGAMERIFCKRKIQLNL) are Cytoplasmic-facing.

Belongs to the G-protein coupled receptor 1 family. Olfactory epithelium.

The protein resides in the cell membrane. Odorant receptor. Activated by a lily-derived aldehyde as well as other odorants. May signal through an inositol 1,4,5-trisphosphate (IP3) second messenger system. The chain is Olfactory receptor 1 from Rattus norvegicus (Rat).